Reading from the N-terminus, the 419-residue chain is Acyl-coenzyme A thioesterase 1 (419 aa).

Catalysis depends on charge relay system residues serine 232, aspartate 324, and histidine 358. Position 416 is a phosphoserine (serine 416).

It belongs to the C/M/P thioester hydrolase family. Monomer. As to expression, expressed in liver.

The protein resides in the cytoplasm. The protein localises to the cytosol. It catalyses the reaction hexadecanoyl-CoA + H2O = hexadecanoate + CoA + H(+). The catalysed reaction is dodecanoyl-CoA + H2O = dodecanoate + CoA + H(+). The enzyme catalyses tetradecanoyl-CoA + H2O = tetradecanoate + CoA + H(+). It carries out the reaction decanoyl-CoA + H2O = decanoate + CoA + H(+). It catalyses the reaction octadecanoyl-CoA + H2O = octadecanoate + CoA + H(+). The catalysed reaction is eicosanoyl-CoA + H2O = eicosanoate + CoA + H(+). The enzyme catalyses (9Z)-octadecenoyl-CoA + H2O = (9Z)-octadecenoate + CoA + H(+). It carries out the reaction (9Z)-hexadecenoyl-CoA + H2O = (9Z)-hexadecenoate + CoA + H(+). It catalyses the reaction (9E)-octadecenoyl-CoA + H2O = (9E)-octadecenoate + CoA + H(+). The protein operates within lipid metabolism; fatty acid metabolism. Functionally, catalyzes the hydrolysis of acyl-CoAs into free fatty acids and coenzyme A (CoASH), regulating their respective intracellular levels. More active towards saturated and unsaturated long chain fatty acyl-CoAs (C12-C20). In Rattus norvegicus (Rat), this protein is Acyl-coenzyme A thioesterase 1 (Acot1).